The chain runs to 154 residues: 6,7-dimethyl-8-ribityllumazine synthase (154 aa).

5-amino-6-(D-ribitylamino)uracil-binding positions include phenylalanine 23, 57–59 (AFE), and 81–83 (AVI). 86–87 (ST) serves as a coordination point for (2S)-2-hydroxy-3-oxobutyl phosphate. The active-site Proton donor is histidine 89. Phenylalanine 114 serves as a coordination point for 5-amino-6-(D-ribitylamino)uracil. (2S)-2-hydroxy-3-oxobutyl phosphate is bound at residue arginine 128.

It belongs to the DMRL synthase family.

It carries out the reaction (2S)-2-hydroxy-3-oxobutyl phosphate + 5-amino-6-(D-ribitylamino)uracil = 6,7-dimethyl-8-(1-D-ribityl)lumazine + phosphate + 2 H2O + H(+). Its pathway is cofactor biosynthesis; riboflavin biosynthesis; riboflavin from 2-hydroxy-3-oxobutyl phosphate and 5-amino-6-(D-ribitylamino)uracil: step 1/2. In terms of biological role, catalyzes the formation of 6,7-dimethyl-8-ribityllumazine by condensation of 5-amino-6-(D-ribitylamino)uracil with 3,4-dihydroxy-2-butanone 4-phosphate. This is the penultimate step in the biosynthesis of riboflavin. The sequence is that of 6,7-dimethyl-8-ribityllumazine synthase from Campylobacter jejuni subsp. jejuni serotype O:2 (strain ATCC 700819 / NCTC 11168).